Here is a 185-residue protein sequence, read N- to C-terminus: Ribosome-recycling factor (185 aa).

Belongs to the RRF family.

The protein resides in the cytoplasm. Functionally, responsible for the release of ribosomes from messenger RNA at the termination of protein biosynthesis. May increase the efficiency of translation by recycling ribosomes from one round of translation to another. The chain is Ribosome-recycling factor from Wolbachia sp. subsp. Brugia malayi (strain TRS).